We begin with the raw amino-acid sequence, 198 residues long: Recombination protein RecR (198 aa).

A C4-type zinc finger spans residues 57 to 72 (CSVCGHITDKDPCYIC). Positions 80-175 (SVICVVQESK…KVTRIAHGLP (96 aa)) constitute a Toprim domain.

This sequence belongs to the RecR family.

Functionally, may play a role in DNA repair. It seems to be involved in an RecBC-independent recombinational process of DNA repair. It may act with RecF and RecO. This is Recombination protein RecR from Listeria welshimeri serovar 6b (strain ATCC 35897 / DSM 20650 / CCUG 15529 / CIP 8149 / NCTC 11857 / SLCC 5334 / V8).